The primary structure comprises 340 residues: Pre-rRNA-processing protein esf-2 (340 aa).

2 stretches are compositionally biased toward basic and acidic residues: residues 1–12 (MPEDDVRNKFLD) and 19–32 (DAGH…DFQK). Positions 1–103 (MPEDDVRNKF…KSVLASDLPG (103 aa)) are disordered. Positions 44-64 (DDEDSEADDFTDAEEEHDQDD) are enriched in acidic residues. Residues 65–95 (AESKDAPAKDGQETTDGKEKKDGKKEKEKKS) are compositionally biased toward basic and acidic residues. The region spanning 124–214 (GVVYISRVPP…KKGSYYRDDI (91 aa)) is the RRM domain. Residues 272–329 (AKKASKGSKAGGEGAAQVTESTIPSAAATTTTTTNDDKRRTFKQIPLAKKRKLDETQP) form a disordered region.

Belongs to the ESF2/ABP1 family.

Its subcellular location is the nucleus. The protein localises to the nucleolus. In terms of biological role, involved in the small subunit (SSU) processome assembly and function, and in the 18S rRNA synthesis. Required for the early cleavages at sites A0, A1 and A2. This is Pre-rRNA-processing protein esf-2 (esf-2) from Neurospora crassa (strain ATCC 24698 / 74-OR23-1A / CBS 708.71 / DSM 1257 / FGSC 987).